Consider the following 222-residue polypeptide: 7-cyano-7-deazaguanine synthase (222 aa).

Position 11–21 (11–21 (FSGGQDSTTCL)) interacts with ATP. Residues C187, C195, C198, and C201 each contribute to the Zn(2+) site.

It belongs to the QueC family. Zn(2+) is required as a cofactor.

The enzyme catalyses 7-carboxy-7-deazaguanine + NH4(+) + ATP = 7-cyano-7-deazaguanine + ADP + phosphate + H2O + H(+). Its pathway is purine metabolism; 7-cyano-7-deazaguanine biosynthesis. Its function is as follows. Catalyzes the ATP-dependent conversion of 7-carboxy-7-deazaguanine (CDG) to 7-cyano-7-deazaguanine (preQ(0)). This Actinobacillus pleuropneumoniae serotype 3 (strain JL03) protein is 7-cyano-7-deazaguanine synthase.